Here is a 219-residue protein sequence, read N- to C-terminus: Glutathione S-transferase U19 (219 aa).

A GST N-terminal domain is found at 3-82 (NEVILLDFWP…YIDEVWSHKN (80 aa)). Residues 13–14 (SM), 39–40 (NK), 53–54 (KI), and 66–67 (ES) each bind glutathione. Positions 88 to 208 (DPYLRAQARF…LPDPEKVTEF (121 aa)) constitute a GST C-terminal domain. S198 is modified (phosphoserine).

This sequence belongs to the GST superfamily. Tau family.

The protein resides in the cytoplasm. It is found in the cytosol. The enzyme catalyses RX + glutathione = an S-substituted glutathione + a halide anion + H(+). Its function is as follows. Catalyzes the glutathionylation of 12-oxophytodienoate (OPDA). In vitro, possesses glutathione S-transferase activity toward 1-chloro-2,4-dinitrobenzene (CDNB) and benzyl isothiocyanate (BITC), and glutathione peroxidase activity toward cumene hydroperoxide. The protein is Glutathione S-transferase U19 (GSTU19) of Arabidopsis thaliana (Mouse-ear cress).